Reading from the N-terminus, the 119-residue chain is Phenol 2-monooxygenase, oxygenase component DmpO (119 aa).

In terms of assembly, the multicomponent enzyme phenol hydroxylase is formed by DmpL (P1 component), DmpM (P2 component), DmpN (P3 component), DmpO (P4 component) and DmpP (P5 component). The oxygenase component is a dimer composed of three subunits, DmpL, DmpN and DmpO (DmpLNO).

It catalyses the reaction phenol + NADH + O2 + H(+) = catechol + NAD(+) + H2O. Its pathway is aromatic compound metabolism; phenol degradation. Requires DmpM for efficient turnover. The activity of DmpLNO oxygenase is inhibited by dithiothreitol (DTT) by a mechanism apparently involving H(2)O(2) generation. Part of a multicomponent enzyme which catalyzes the degradation of phenol and some of its methylated derivatives. DmpL, DmpN and DmpO form the oxygenase component of the complex. Required for growth on phenol and for in vitro phenol hydroxylase activity. The protein is Phenol 2-monooxygenase, oxygenase component DmpO of Pseudomonas sp. (strain CF600).